The following is a 301-amino-acid chain: E3 ubiquitin-protein ligase RNF144B (301 aa).

A TRIAD supradomain region spans residues 26–242 (PLVTCKLCLC…YDKGPCRNKL (217 aa)). Cysteine 30, cysteine 33, cysteine 53, cysteine 56, cysteine 121, cysteine 126, cysteine 145, cysteine 148, cysteine 153, cysteine 156, histidine 161, cysteine 166, cysteine 191, and cysteine 194 together coordinate Zn(2+). An RING-type 1 zinc finger spans residues 30 to 80 (CKLCLCEQSLDKMTMLQECQCIFCTPCLKQYMVLSIREGCGSPITCPDMVC). The IBR-type zinc finger occupies 101-166 (QLYQRLKFER…KDAWHEESSC (66 aa)). Residues 191–220 (CPVCRIYIERNEGCAQMMCKNCKHTFCWYC) form an RING-type 2; atypical zinc finger. Residue cysteine 204 is part of the active site. Positions 209, 212, 217, 220, 232, and 238 each coordinate Zn(2+). The chain crosses the membrane as a helical span at residues 256 to 276 (VVGILVGLGVIALVTSPLLLL).

The protein belongs to the RBR family. RNF144 subfamily. Interacts with UBE2L3, UBE2L6 and LCMT2, as well as with BAX. Interacts with TBK1; this interaction inhibits TBK1 phosphorylation and 'Lys-63'-linked polyubiquitination. Auto-ubiquitinated.

It is found in the mitochondrion membrane. The protein localises to the cytoplasm. It carries out the reaction [E2 ubiquitin-conjugating enzyme]-S-ubiquitinyl-L-cysteine + [acceptor protein]-L-lysine = [E2 ubiquitin-conjugating enzyme]-L-cysteine + [acceptor protein]-N(6)-ubiquitinyl-L-lysine.. It functions in the pathway protein modification; protein ubiquitination. Functionally, E3 ubiquitin-protein ligase which accepts ubiquitin from E2 ubiquitin-conjugating enzymes UBE2L3 and UBE2L6 in the form of a thioester and then directly transfers the ubiquitin to targeted substrates such as LCMT2, thereby promoting their degradation. Induces apoptosis via a p53/TP53-dependent but caspase-independent mechanism. Plays a crucial role in maintaining the genomic stability by controlling the degradation of multiple proteins involved in mitotic progression and DNA damage. Regulates epithelial homeostasis by mediating degradation of CDKN1A and isoform 2 of TP63. Plays a regulatory role in innate immunity by negatively regulating IRF3 activation and IFN-beta production. Mechanistically, inhibits TBK1 phosphorylation and 'Lys-63'-linked polyubiquitination independently of its E3 ligase activity. Alternatively, promotes 'Lys-27' and 'Lys-33'-linked ubiquitination of IFIH1/MDA5, promoting selective autophagic degradation of IFIH1/MDA5 to inhibit antiviral response. The chain is E3 ubiquitin-protein ligase RNF144B (Rnf144b) from Mus musculus (Mouse).